The following is a 497-amino-acid chain: Apolipoprotein N-acyltransferase (497 aa).

6 helical membrane passes run 21-41 (FAPF…ALLW), 51-71 (ALTG…WLYV), 85-105 (VLAL…TGWI), 119-139 (GMVA…FTGF), 157-177 (FAPV…AAWL), and 189-209 (FWLG…IHWT). Positions 221–461 (LQGNIPQNMK…GLHSTAQGFG (241 aa)) constitute a CN hydrolase domain. Glu-259 serves as the catalytic Proton acceptor. Residue Lys-319 is part of the active site. Cys-371 (nucleophile) is an active-site residue. A helical transmembrane segment spans residues 472 to 492 (SLVFALIGLLLLAGSLAAFSG).

It belongs to the CN hydrolase family. Apolipoprotein N-acyltransferase subfamily.

It localises to the cell inner membrane. It catalyses the reaction N-terminal S-1,2-diacyl-sn-glyceryl-L-cysteinyl-[lipoprotein] + a glycerophospholipid = N-acyl-S-1,2-diacyl-sn-glyceryl-L-cysteinyl-[lipoprotein] + a 2-acyl-sn-glycero-3-phospholipid + H(+). It functions in the pathway protein modification; lipoprotein biosynthesis (N-acyl transfer). Catalyzes the phospholipid dependent N-acylation of the N-terminal cysteine of apolipoprotein, the last step in lipoprotein maturation. This chain is Apolipoprotein N-acyltransferase, found in Nitrosomonas europaea (strain ATCC 19718 / CIP 103999 / KCTC 2705 / NBRC 14298).